Consider the following 670-residue polypeptide: Solute carrier organic anion transporter family member 1A2 (670 aa).

Topologically, residues 1-20 are cytoplasmic; the sequence is MGETEKRIETHRIRCLSKLK. The chain crosses the membrane as a helical span at residues 21–40; that stretch reads MFLLAITCAFVSKTLSGSYM. Topologically, residues 41 to 59 are extracellular; it reads NSMLTQIERQFNIPTSLVG. The helical transmembrane segment at 60-80 threads the bilayer; sequence FINGSFEIGNLLLIIFVSYFG. The Cytoplasmic segment spans residues 81-86; sequence TKLHRP. The helical transmembrane segment at 87 to 111 threads the bilayer; it reads IMIGIGCVVMGLGCFLKSLPHFLMN. Topologically, residues 112 to 155 are extracellular; it reads QYEYESTVSVSGNLSSNSFLCMENGTQILRPTQDPSECTKEVKS. 2 N-linked (GlcNAc...) asparagine glycosylation sites follow: asparagine 124 and asparagine 135. The chain crosses the membrane as a helical span at residues 156-184; it reads LMWVYVLVGNIVRGMGETPILPLGISYIE. The Cytoplasmic segment spans residues 185–203; it reads DFAKFENSPLYIGLVETGA. A helical transmembrane segment spans residues 204-224; that stretch reads IIGPLIGLLLASFCANVYVDT. Topologically, residues 225–242 are extracellular; the sequence is GFVNTDDLIITPTDTRWV. Residues 243 to 267 traverse the membrane as a helical segment; the sequence is GAWWFGFLICAGVNVLTAIPFFFLP. Topologically, residues 268–311 are cytoplasmic; the sequence is NTLPKEGLETNADIIKNENEDKQKEEVKKEKYGITKDFLPFMKS. Residues 312–333 form a helical membrane-spanning segment; the sequence is LSCNPIYMLFILVSVIQFNAFV. The Extracellular portion of the chain corresponds to 334–353; sequence NMISFMPKYLEQQYGISSSD. Residues 354-377 form a helical membrane-spanning segment; that stretch reads AIFLMGIYNLPPICIGYIIGGLIM. The Cytoplasmic segment spans residues 378 to 381; it reads KKFK. Residues 382–405 form a helical membrane-spanning segment; it reads ITVKQAAHIGCWLSLLEYLLYFLS. Residues 406–513 are Extracellular-facing; it reads FLMTCENSSV…PDCSLMLQYF (108 aa). N-linked (GlcNAc...) asparagine glycosylation is found at asparagine 412 and asparagine 419. Residues 433–488 form the Kazal-like domain; the sequence is NDIFADCNVDCNCPSKIWDPVCGNNGLSYLSACLAGCETSIGTGINMVFQNCSCIQ. 3 cysteine pairs are disulfide-bonded: cysteine 439-cysteine 469, cysteine 445-cysteine 465, and cysteine 454-cysteine 486. The helical transmembrane segment at 514–536 threads the bilayer; it reads LILSAMSSFIYSLAAIPGYMVLL. Topologically, residues 537–545 are cytoplasmic; the sequence is RCMKSEEKS. A helical transmembrane segment spans residues 546–571; sequence LGVGLHTFCTRVFAGIPAPIYFGALM. The Extracellular portion of the chain corresponds to 572–605; the sequence is DSTCLHWGTLKCGESGACRIYDSTTFRYIYLGLP. A helical transmembrane segment spans residues 606-623; that stretch reads AALRGSSFVPALIILILL. Residues 624 to 670 lie on the Cytoplasmic side of the membrane; that stretch reads RKCHLPGENASSGTELIETKVKGKENECKDIYQKSTVLKDDELKTKL.

This sequence belongs to the organo anion transporter (TC 2.A.60) family. Higher expression in the brain than in liver and kidney. Expressed in brain neurons in both cortex and hippocampus. Expressed in placental trophoblasts. Also expressed in lung and testes at lower levels. Expressed in the eye (at protein level). Expressed in the retina in the outer and inner nuclear layers, the inner plexiform layer and the ganglion cell layer. Expressed in liver and prostate. In testis, primarily localized to the basal membrane of Sertoli cells and weakly expressed in Leydig cells and within the tubules. Expressed in fetal brain and liver.

It localises to the cell membrane. Its subcellular location is the basal cell membrane. The enzyme catalyses taurocholate(out) = taurocholate(in). The catalysed reaction is glycocholate(out) = glycocholate(in). It carries out the reaction taurochenodeoxycholate(out) = taurochenodeoxycholate(in). It catalyses the reaction tauroursodeoxycholate(out) = tauroursodeoxycholate(in). The enzyme catalyses dehydroepiandrosterone 3-sulfate(out) = dehydroepiandrosterone 3-sulfate(in). The catalysed reaction is estrone 3-sulfate(out) = estrone 3-sulfate(in). It carries out the reaction 3,3',5'-triiodo-L-thyronine(out) = 3,3',5'-triiodo-L-thyronine(in). It catalyses the reaction L-thyroxine(out) = L-thyroxine(in). The enzyme catalyses taurodeoxycholate(out) = taurodeoxycholate(in). The catalysed reaction is glycodeoxycholate(out) = glycodeoxycholate(in). It carries out the reaction glycochenodeoxycholate(out) = glycochenodeoxycholate(in). It catalyses the reaction glycoursodeoxycholate(out) = glycoursodeoxycholate(in). The enzyme catalyses 17beta-estradiol 17-O-(beta-D-glucuronate)(out) = 17beta-estradiol 17-O-(beta-D-glucuronate)(in). The catalysed reaction is prostaglandin E2(out) = prostaglandin E2(in). It carries out the reaction substance P(out) = substance P(in). Its activity is regulated as follows. Transport activity is inhibited by the grapefruit juice component naringin. Na(+)-independent transporter that mediates the cellular uptake of a broad range of organic anions such as the endogenous bile salts cholate and deoxycholate, either in their unconjugated or conjugated forms (taurocholate and glycocholate), at the plasmam membrane. Responsible for intestinal absorption of bile acids. Transports dehydroepiandrosterone 3-sulfate (DHEAS), a major circulating steroid secreted by the adrenal cortex, as well as estrone 3-sulfate and 17beta-estradiol 17-O-(beta-D-glucuronate). Mediates apical uptake of all-trans-retinol (atROL) across human retinal pigment epithelium, which is essential to maintaining the integrity of the visual cycle and thus vision. Involved in the uptake of clinically used drugs. Capable of thyroid hormone transport (both T3 or 3,3',5'-triiodo-L-thyronine, and T4 or L-tyroxine). Also transports prostaglandin E2. Plays roles in blood-brain and -cerebrospinal fluid barrier transport of organic anions and signal mediators, and in hormone uptake by neural cells. May also play a role in the reuptake of neuropeptides such as substance P/TAC1 and vasoactive intestinal peptide/VIP released from retinal neurons. May play an important role in plasma and tissue distribution of the structurally diverse chemotherapeutic drugs methotrexate and paclitaxel. Shows a pH-sensitive substrate specificity which may be ascribed to the protonation state of the binding site and leads to a stimulation of substrate transport in an acidic microenvironment. Hydrogencarbonate/HCO3(-) acts as the probable counteranion that exchanges for organic anions. May contribute to regulate the transport of organic compounds in testis across the blood-testis-barrier. The chain is Solute carrier organic anion transporter family member 1A2 (SLCO1A2) from Homo sapiens (Human).